Consider the following 124-residue polypeptide: Putative calmodulin-3 (124 aa).

EF-hand domains follow at residues 1 to 18 (GCIT…LGQN), 19 to 54 (PTEA…KIKD), 56 to 91 (DFEE…LGEK), and 92 to 124 (LTDE…MMAK). Residues Cys2, Glu7, Asp32, Asp34, Asn36, Thr38, Glu43, Asp69, Asp71, Asn73, and Glu80 each coordinate Ca(2+). Lys91 is subject to N6,N6,N6-trimethyllysine. Asp105, Asp107, Asp109, Gln111, and Glu116 together coordinate Ca(2+).

The protein belongs to the calmodulin family. Not detected in the organs tested.

In terms of biological role, calmodulin mediates the control of a large number of enzymes, ion channels and other proteins by Ca(2+). Among the enzymes to be stimulated by the calmodulin-Ca(2+) complex are a number of protein kinases and phosphatases. In Solanum tuberosum (Potato), this protein is Putative calmodulin-3 (PCM3).